Consider the following 279-residue polypeptide: Vomeronasal type-1 receptor A8 (279 aa).

Topologically, residues 1–19 are extracellular; that stretch reads MNKDHTLYCSVYIRNAFFS. The chain crosses the membrane as a helical span at residues 20-40; it reads EIGIGISANSCLLLFHTFMFI. Topologically, residues 41-49 are cytoplasmic; the sequence is RGHRPRLTD. The helical transmembrane segment at 50 to 70 threads the bilayer; sequence LPIGFVALIHLVMLLLAAYIT. Topologically, residues 71 to 93 are extracellular; the sequence is EDFFMSSGGWDDITCKLVIFLHR. An intrachain disulfide couples C85 to C172. A helical membrane pass occupies residues 94–114; that stretch reads FFRSLSVCATCLLSVFQAIIL. Topologically, residues 115-134 are cytoplasmic; sequence CPQSSHLAKLKQNSPHQLSY. The chain crosses the membrane as a helical span at residues 135-155; it reads FFIFLSIFYTSISSQILIAAI. Residues 156–159 lie on the Extracellular side of the membrane; the sequence is PTQN. A glycan (N-linked (GlcNAc...) asparagine) is linked at N159. The chain crosses the membrane as a helical span at residues 160–180; the sequence is ITFVNLIYITNSCSFLPLSSS. The Cytoplasmic segment spans residues 181–187; sequence MQHTFST. Residues 188–208 form a helical membrane-spanning segment; it reads LLTFRNVFVIGLMGLSTCYMA. Residues 209–238 are Extracellular-facing; it reads TLLCRHKTRSQRLQNSKLSPKATPEQRALR. A helical transmembrane segment spans residues 239–259; the sequence is TILMLMSFFLLMSTFDSIISY. The Cytoplasmic portion of the chain corresponds to 260-279; the sequence is SRTIITGKSTALLCPDSCRS.

It belongs to the G-protein coupled receptor 1 family. In terms of tissue distribution, expressed in a subset of sensory neurons located in the apical layer of the vomeronasal organ.

The protein resides in the cell membrane. In terms of biological role, putative pheromone receptor implicated in the regulation of social and reproductive behavior. This is Vomeronasal type-1 receptor A8 from Mus musculus (Mouse).